Here is a 235-residue protein sequence, read N- to C-terminus: Peptidyl-tRNA hydrolase (235 aa).

Tyr14 lines the tRNA pocket. His19 serves as the catalytic Proton acceptor. The tRNA site is built by Phe64, Asn66, and Asn112. The tract at residues 188–235 is disordered; sequence APARNSGTRPDNPGKGSPEKPAAKPANDPIAEPPSLSDRLRALTERFR. Basic and acidic residues predominate over residues 225-235; that stretch reads DRLRALTERFR.

It belongs to the PTH family. In terms of assembly, monomer.

Its subcellular location is the cytoplasm. The catalysed reaction is an N-acyl-L-alpha-aminoacyl-tRNA + H2O = an N-acyl-L-amino acid + a tRNA + H(+). Hydrolyzes ribosome-free peptidyl-tRNAs (with 1 or more amino acids incorporated), which drop off the ribosome during protein synthesis, or as a result of ribosome stalling. In terms of biological role, catalyzes the release of premature peptidyl moieties from peptidyl-tRNA molecules trapped in stalled 50S ribosomal subunits, and thus maintains levels of free tRNAs and 50S ribosomes. This Paracoccus denitrificans (strain Pd 1222) protein is Peptidyl-tRNA hydrolase.